Reading from the N-terminus, the 93-residue chain is MKLLMVLMLAALSQHCYAGSGCPLLENVISKTINPQVSKTEYKELLQEFIDDNATTNAIDELKECFLNQTDETLSNVEVFMQLIYDSSLCDLF.

The signal sequence occupies residues 1–18; that stretch reads MKLLMVLMLAALSQHCYA. Residues Asn-53 and Asn-68 are each glycosylated (N-linked (GlcNAc...) asparagine).

Belongs to the secretoglobin family. Lipophilin subfamily. As to expression, mammary gland specific. Over-expressed in breast cancer.

The protein localises to the secreted. The sequence is that of Mammaglobin-A (SCGB2A2) from Homo sapiens (Human).